The chain runs to 60 residues: Large ribosomal subunit protein bL32A (60 aa).

Residues 1–19 (MAVPKRRMSRSNTRSRRSQ) show a composition bias toward basic residues. A disordered region spans residues 1–21 (MAVPKRRMSRSNTRSRRSQWK).

It belongs to the bacterial ribosomal protein bL32 family.

The chain is Large ribosomal subunit protein bL32A from Nocardia farcinica (strain IFM 10152).